Reading from the N-terminus, the 90-residue chain is Probable Fe(2+)-trafficking protein (90 aa).

The protein belongs to the Fe(2+)-trafficking protein family. As to quaternary structure, monomer.

Functionally, could be a mediator in iron transactions between iron acquisition and iron-requiring processes, such as synthesis and/or repair of Fe-S clusters in biosynthetic enzymes. In Enterobacter sp. (strain 638), this protein is Probable Fe(2+)-trafficking protein.